Consider the following 81-residue polypeptide: Large ribosomal subunit protein bL31B (81 aa).

It belongs to the bacterial ribosomal protein bL31 family. Type B subfamily. As to quaternary structure, part of the 50S ribosomal subunit.

The protein is Large ribosomal subunit protein bL31B of Lactococcus lactis subsp. lactis (strain IL1403) (Streptococcus lactis).